The chain runs to 256 residues: Homeobox protein ceh-34 (256 aa).

A DNA-binding region (homeobox) is located at residues 134–193; the sequence is GEETNYCFKSKSRNVLRDAYKKCQYPSVEDKRRLAQQTELSIIQVSNWFKNKRQRERAAG. The tract at residues 187–233 is disordered; it reads QRERAAGQLDRSSARSNDSDDGSSGCESKPPMNIDSPAPPPLPTSFD.

This sequence belongs to the SIX/Sine oculis homeobox family. As to quaternary structure, interacts (via N-terminus) with eya-1 (via C-terminus). As to expression, shows expression only in the pharyngeal nervous system.

It localises to the nucleus. Its function is as follows. Acts as a transcription regulator. Binds to the sequence motif 5'-TCAGGTT-3'. Binds to the cis-regulatory element of proapoptotic factor egl-1 gene and together with eya-1 activates egl-1 expression to promote motor neuron M4 sister cell apoptosis. Also promotes apoptosis of I1 pharyngeal neuron sister cell. Together with eya-1, required to specify the coelomocyte fate in embryonic and postembryonic precursors. Required to establish and maintain the differentiation of all 14 classes of pharyngeal neurons. Controls the neurotransmitter signaling capacity of the neurons and is required for the expression of some neurotransmitter receptors including mgl-1, glr-2 and ser-7. Affects the neuropeptidergic identity of pharyngeal neurons. Required for the pharyngeal expression of sensory receptors gur-3, glu-7 and str-97, antimicrobial defense genes such as spp-12, gpla-1/flr-2 and htrl-1, and pan-pharyngeal nervous system genes such as kin-36. Required to establish and maintain pharyngeal nervous system architecture by ensuring correct axon and synapse organization. Required for expression of eya-1 which may act as a transcriptional cofactor to specify distinct pharyngeal neuron types. Cooperates with several homeobox proteins to specify distinct pharyngeal neuron types including unc-86 in the NSM and I1 neurons, ceh-14 in the I2 neuron, ceh-2 and pros-1 in the I3 neuron, ceh-45 in the M1 neuron, ceh-2 in the M3 neuron, ceh-28 and zag-1 in the M4 neuron, and vab-15 in the M5 neuron. The chain is Homeobox protein ceh-34 (ceh-34) from Caenorhabditis elegans.